We begin with the raw amino-acid sequence, 102 residues long: Small ribosomal subunit protein uS10c (102 aa).

This sequence belongs to the universal ribosomal protein uS10 family. As to quaternary structure, part of the 30S ribosomal subunit.

The protein resides in the plastid. It localises to the chloroplast. Functionally, involved in the binding of tRNA to the ribosomes. The chain is Small ribosomal subunit protein uS10c from Guillardia theta (Cryptophyte).